We begin with the raw amino-acid sequence, 591 residues long: NADP-dependent malic enzyme (591 aa).

Residues 1-10 (MESTLKEMRD) are compositionally biased toward basic and acidic residues. Residues 1–26 (MESTLKEMRDGASVLDMDPKSTVGGG) form a disordered region. Catalysis depends on Tyr139, which acts as the Proton donor. Arg192 is an NAD(+) binding site. Lys210 functions as the Proton acceptor in the catalytic mechanism. A divalent metal cation is bound by residues Glu282, Asp283, and Asp306. Residue Asp306 coordinates NAD(+). Residue 335–351 (LFLGAGEAGTGIAELIA) participates in NADP(+) binding. An NAD(+)-binding site is contributed by Asn447.

It belongs to the malic enzymes family. Homotetramer. Mg(2+) is required as a cofactor. Requires Mn(2+) as cofactor. In terms of tissue distribution, mRNA found twofold higher in leaves and stems than in roots.

It localises to the cytoplasm. It carries out the reaction (S)-malate + NADP(+) = pyruvate + CO2 + NADPH. It catalyses the reaction oxaloacetate + H(+) = pyruvate + CO2. This Populus trichocarpa (Western balsam poplar) protein is NADP-dependent malic enzyme.